Consider the following 912-residue polypeptide: Isoleucine--tRNA ligase (912 aa).

The 'HIGH' region signature appears at 57 to 67 (PYANGDIHLGT). Glu549 lines the L-isoleucyl-5'-AMP pocket. A 'KMSKS' region motif is present at residues 590 to 594 (KMSKS). Lys593 serves as a coordination point for ATP. Zn(2+) contacts are provided by Cys880, Cys883, Cys900, and Cys903.

It belongs to the class-I aminoacyl-tRNA synthetase family. IleS type 1 subfamily. In terms of assembly, monomer. Zn(2+) is required as a cofactor.

Its subcellular location is the cytoplasm. It catalyses the reaction tRNA(Ile) + L-isoleucine + ATP = L-isoleucyl-tRNA(Ile) + AMP + diphosphate. Its function is as follows. Catalyzes the attachment of isoleucine to tRNA(Ile). As IleRS can inadvertently accommodate and process structurally similar amino acids such as valine, to avoid such errors it has two additional distinct tRNA(Ile)-dependent editing activities. One activity is designated as 'pretransfer' editing and involves the hydrolysis of activated Val-AMP. The other activity is designated 'posttransfer' editing and involves deacylation of mischarged Val-tRNA(Ile). This chain is Isoleucine--tRNA ligase, found in Fervidobacterium pennivorans (strain DSM 9078 / Ven5).